Consider the following 192-residue polypeptide: Adenylate kinase (192 aa).

G10–T18 provides a ligand contact to ATP.

This sequence belongs to the archaeal adenylate kinase family. Monomer.

It localises to the cytoplasm. The enzyme catalyses AMP + ATP = 2 ADP. This is Adenylate kinase (adkA) from Methanococcus voltae.